Reading from the N-terminus, the 41-residue chain is Large ribosomal subunit protein bL36 (41 aa).

This sequence belongs to the bacterial ribosomal protein bL36 family.

In Brucella abortus (strain S19), this protein is Large ribosomal subunit protein bL36.